Reading from the N-terminus, the 264-residue chain is NAD-capped RNA hydrolase NudC (264 aa).

2 residues coordinate Zn(2+): C99 and C102. E112 provides a ligand contact to substrate. C117 and C120 together coordinate Zn(2+). A substrate-binding site is contributed by Y125. The Nudix hydrolase domain occupies 126 to 253 (PVICPSIIVA…TIARKLIHAT (128 aa)). Residues A162, E178, and E182 each contribute to the a divalent metal cation site. The short motif at 163 to 184 (GFVEVGETFEQAVQREVFEETG) is the Nudix box element. 196–203 (QPWAFPNS) contacts substrate. An a divalent metal cation-binding site is contributed by E223. A246 provides a ligand contact to substrate.

It belongs to the Nudix hydrolase family. NudC subfamily. As to quaternary structure, homodimer. Mg(2+) is required as a cofactor. Requires Mn(2+) as cofactor. The cofactor is Zn(2+).

The enzyme catalyses a 5'-end NAD(+)-phospho-ribonucleoside in mRNA + H2O = a 5'-end phospho-adenosine-phospho-ribonucleoside in mRNA + beta-nicotinamide D-ribonucleotide + 2 H(+). It catalyses the reaction NAD(+) + H2O = beta-nicotinamide D-ribonucleotide + AMP + 2 H(+). The catalysed reaction is NADH + H2O = reduced beta-nicotinamide D-ribonucleotide + AMP + 2 H(+). Its function is as follows. mRNA decapping enzyme that specifically removes the nicotinamide adenine dinucleotide (NAD) cap from a subset of mRNAs by hydrolyzing the diphosphate linkage to produce nicotinamide mononucleotide (NMN) and 5' monophosphate mRNA. The NAD-cap is present at the 5'-end of some mRNAs and stabilizes RNA against 5'-processing. Has preference for mRNAs with a 5'-end purine. Catalyzes the hydrolysis of a broad range of dinucleotide pyrophosphates. The sequence is that of NAD-capped RNA hydrolase NudC from Haemophilus influenzae (strain PittGG).